The sequence spans 577 residues: External alternative NAD(P)H-ubiquinone oxidoreductase B1, mitochondrial (577 aa).

A mitochondrion-targeting transit peptide spans 1 to 35 (MRGFTYLSKVLHSHSSYSKLLVLCSVSTGGLLVYA). 57-87 (RVVVLGTGWGGTSFLKDVDISSYDVQVVSPR) lines the FAD pocket. 221 to 257 (LHFVIVGGGPTGVEFAAELHDYVYEDLVKIYPSVKDF) lines the NAD(+) pocket. An EF-hand domain is found at 378–413 (KVMEDISAIFKAADKDDSGTLSIEEFRDVLEDIIIR). Residues Asp-391, Asp-393, Ser-395, Thr-397, and Glu-402 each contribute to the Ca(2+) site. Residues 568–577 (YIFGRDSSRI) carry the Microbody targeting signal motif.

The protein belongs to the NADH dehydrogenase family. It depends on FAD as a cofactor.

The protein localises to the mitochondrion inner membrane. Its subcellular location is the peroxisome. It carries out the reaction a quinone + NADH + H(+) = a quinol + NAD(+). It catalyses the reaction a ubiquinone + NADH + H(+) = a ubiquinol + NAD(+). Its activity is regulated as follows. Activity is calcium-dependent with a more pronounced effect at higher pH. Functionally, alternative NADH-ubiquinone oxidoreductase which catalyzes the oxidation of mitochondrial NADH does not translocate protons across the inner mitochondrial membrane. Calcium-dependent NAD(P)H dehydrogenase. Binds calcium ions. This chain is External alternative NAD(P)H-ubiquinone oxidoreductase B1, mitochondrial (NDB1), found in Solanum tuberosum (Potato).